Here is a 311-residue protein sequence, read N- to C-terminus: Cyclin-dependent kinase B1-2 (311 aa).

The 300-residue stretch at 4 to 303 (YEKLEKVGEG…AKAALDHPYF (300 aa)) folds into the Protein kinase domain. Residues 10 to 18 (VGEGTYGKV) and Lys-33 each bind ATP. Residue Tyr-15 is modified to Phosphotyrosine. The Proton acceptor role is filled by Asp-144. Thr-178 carries the phosphothreonine modification.

The protein belongs to the protein kinase superfamily. CMGC Ser/Thr protein kinase family. CDC2/CDKX subfamily. Interacts with CKS1. As to expression, expressed in flowers.

The catalysed reaction is L-seryl-[protein] + ATP = O-phospho-L-seryl-[protein] + ADP + H(+). The enzyme catalyses L-threonyl-[protein] + ATP = O-phospho-L-threonyl-[protein] + ADP + H(+). It catalyses the reaction [DNA-directed RNA polymerase] + ATP = phospho-[DNA-directed RNA polymerase] + ADP + H(+). Its function is as follows. Together with CDKB1-1, promotes both the last division in the stomatal cell lineage as well as the number of stomata. In collaboration with MYB124 and MYB88, restrict the G1/S transition and chloroplast and nuclear number during stomatal formation, and normally maintain fate and developmental progression throughout the stomatal cell lineage. The polypeptide is Cyclin-dependent kinase B1-2 (CDKB1-2) (Arabidopsis thaliana (Mouse-ear cress)).